The following is a 517-amino-acid chain: Diacylglycerol O-acyltransferase 1C (517 aa).

The disordered stretch occupies residues 1–82 (MAISDVPAAA…NVGAAANDAG (82 aa)). A compositionally biased stretch (low complexity) spans 8-17 (AAAGTTATTT). A compositionally biased stretch (basic and acidic residues) spans 53 to 64 (ITDDDNIKDHKP). Over residues 71–81 (DDNVGAAANDA) the composition is skewed to low complexity. 7 helical membrane-spanning segments follow: residues 121–141 (HAGLFNLCIVVLVAVNSRLII), 165–185 (WPLFMCCLSLAIFPLAAFVVE), 197–217 (VVVLLHLIISTVELCYPVLVI), 222–242 (SAFVSGVTLMLLTCIVWLKLV), 272–292 (YPYTVTFRSLAYFMVAPTLCY), 305–325 (GWVFRQLVKLIIFTGVMGFII), and 361–381 (VWLCMFYCFFHLWLNILAELV). An FYXDWWN motif motif is present at residues 388–394 (FYKDWWN). The next 3 membrane-spanning stretches (helical) occupy residues 429 to 449 (GAASLIAFLVSAVFHELCIAV), 451 to 471 (CHMFKLWAFIGIMFQVPLVLI), and 484 to 504 (VGNMIFWFIFCILGQPMSVLL). H443 is an active-site residue.

Belongs to the membrane-bound acyltransferase family. Sterol o-acyltransferase subfamily.

The protein localises to the endoplasmic reticulum membrane. It catalyses the reaction an acyl-CoA + a 1,2-diacyl-sn-glycerol = a triacyl-sn-glycerol + CoA. The protein operates within glycerolipid metabolism; triacylglycerol biosynthesis. Its function is as follows. Involved in triacylglycerol (TAG) synthesis. Catalyzes the acylation of the sn-3 hydroxy group of sn-1,2-diacylglycerol using acyl-CoA. This chain is Diacylglycerol O-acyltransferase 1C, found in Glycine max (Soybean).